We begin with the raw amino-acid sequence, 603 residues long: Myotubularin (603 aa).

Over residues 1–13 (MASASTSKYNSHS) the composition is skewed to polar residues. The interval 1 to 25 (MASASTSKYNSHSLENESIKRTSRD) is disordered. A phosphoserine mark is found at S13 and S18. Residues 14 to 25 (LENESIKRTSRD) are compositionally biased toward basic and acidic residues. One can recognise a GRAM domain in the interval 29–97 (RDLTEAVPRL…GVISRIEKMG (69 aa)). A Myotubularin phosphatase domain is found at 163–538 (GWTVYNPVEE…RHLELWVNYY (376 aa)). The a 1,2-diacyl-sn-glycero-3-phospho-(1D-myo-inositol-3,5-bisphosphate) site is built by N288, N313, and I314. Positions 288, 313, and 314 each coordinate a 1,2-diacyl-sn-glycero-3-phospho-(1D-myo-inositol-3-phosphate). C375 acts as the Phosphocysteine intermediate in catalysis. Residues S376, D377, G378, W379, D380, R381, K417, and R421 each contribute to the a 1,2-diacyl-sn-glycero-3-phospho-(1D-myo-inositol-3,5-bisphosphate) site. 6 residues coordinate a 1,2-diacyl-sn-glycero-3-phospho-(1D-myo-inositol-3-phosphate): S376, D377, G378, W379, D380, and R381. R421 lines the a 1,2-diacyl-sn-glycero-3-phospho-(1D-myo-inositol-3-phosphate) pocket. Residue T495 is modified to Phosphothreonine. The disordered stretch occupies residues 579-603 (SAKLSDPPTSPSSPSQMMPHVQTHF). S588 is subject to Phosphoserine.

This sequence belongs to the protein-tyrosine phosphatase family. Non-receptor class myotubularin subfamily. As to quaternary structure, heterodimer with MTMR12. Interacts with KMT2A/MLL1 (via SET domain). Interacts with DES in skeletal muscle but not in cardiac muscle. Interacts with SPEG.

The protein resides in the cytoplasm. The protein localises to the cell membrane. It localises to the cell projection. It is found in the filopodium. Its subcellular location is the ruffle. The protein resides in the late endosome. The protein localises to the myofibril. It localises to the sarcomere. It carries out the reaction a 1,2-diacyl-sn-glycero-3-phospho-(1D-myo-inositol-3-phosphate) + H2O = a 1,2-diacyl-sn-glycero-3-phospho-(1D-myo-inositol) + phosphate. The enzyme catalyses a 1,2-diacyl-sn-glycero-3-phospho-(1D-myo-inositol-3,5-bisphosphate) + H2O = a 1,2-diacyl-sn-glycero-3-phospho-(1D-myo-inositol-5-phosphate) + phosphate. The catalysed reaction is 1,2-dioctanoyl-sn-glycero-3-phospho-(1-D-myo-inositol-3-phosphate) + H2O = 1,2-dioctanoyl-sn-glycero-3-phospho-(1D-myo-inositol) + phosphate. It catalyses the reaction 1,2-dioctanoyl-sn-glycero-3-phospho-(1D-myo-inositol-3,5-bisphosphate) + H2O = 1,2-dioctanoyl-sn-glycero-3-phospho-(1D-myo-inositol-5-phosphate) + phosphate. It carries out the reaction 1,2-dihexadecanoyl-sn-glycero-3-phospho-(1D-myo-inositol-3,5-phosphate) + H2O = 1,2-dihexadecanoyl-sn-glycero-3-phospho-(1D-myo-inositol-5-phosphate) + phosphate. Allosterically activated by phosphatidylinositol 5-phosphate (PI5P). Its function is as follows. Lipid phosphatase which dephosphorylates phosphatidylinositol 3-monophosphate (PI3P) and phosphatidylinositol 3,5-bisphosphate (PI(3,5)P2). Has also been shown to dephosphorylate phosphotyrosine- and phosphoserine-containing peptides. Negatively regulates EGFR degradation through regulation of EGFR trafficking from the late endosome to the lysosome. Plays a role in vacuolar formation and morphology. Regulates desmin intermediate filament assembly and architecture. Plays a role in mitochondrial morphology and positioning. Required for skeletal muscle maintenance but not for myogenesis. In skeletal muscles, stabilizes MTMR12 protein levels. The chain is Myotubularin from Pongo abelii (Sumatran orangutan).